We begin with the raw amino-acid sequence, 117 residues long: Photosystem II reaction center Psb28 protein (117 aa).

The protein belongs to the Psb28 family. In terms of assembly, part of the photosystem II complex.

It localises to the cellular thylakoid membrane. In Prochlorococcus marinus (strain AS9601), this protein is Photosystem II reaction center Psb28 protein.